Here is a 2134-residue protein sequence, read N- to C-terminus: Genome polyprotein (2134 aa).

Residues 1-1377 lie on the Cytoplasmic side of the membrane; it reads MSKLFSTVGR…WLFERLKTSK (1377 aa). The 102-residue stretch at 781–882 folds into the LRAT domain; it reads IVSCSGEKAK…GDYGTKEGEK (102 aa). Catalysis depends on residues H791 and H802. The Acyl-thioester intermediate role is filled by C863. Residues 1127–1289 enclose the SF3 helicase domain; the sequence is LNKLGRLDKP…EEFSTHAMLD (163 aa). 1153–1160 contacts ATP; the sequence is GNRGGGKS. Residues 1378-1392 lie within the membrane without spanning it; sequence WYILGCVGAVLAVSA. At 1393 to 2134 the chain is on the cytoplasmic side; it reads LGVFAYHMIK…VKYRFIDDNF (742 aa). Y1415 is subject to O-(5'-phospho-RNA)-tyrosine. Residues 1431–1643 enclose the Peptidase C3 domain; it reads DAQSVVDISN…ITKEMIEEML (213 aa). Residues H1477, D1515, and C1603 each act as for protease 3C activity in the active site. The RdRp catalytic domain occupies 1880–2001; sequence DLVVGLDFSN…CIKKEYLDQK (122 aa).

This sequence belongs to the picornaviridae polyprotein family. Specific enzymatic cleavages by the viral protease in vivo yield a variety of precursors and mature proteins. During virion maturation, non-infectious particles are rendered infectious following cleavage of VP0. This maturation cleavage is followed by a conformational change of the particle. In terms of processing, VPg is uridylylated by the polymerase and is covalently linked to the 5'-end of genomic RNA. This uridylylated form acts as a nucleotide-peptide primer for the polymerase.

It is found in the virion. It localises to the host cytoplasm. The protein resides in the host cytoplasmic vesicle membrane. It catalyses the reaction RNA(n) + a ribonucleoside 5'-triphosphate = RNA(n+1) + diphosphate. The catalysed reaction is a ribonucleoside 5'-triphosphate + H2O = a ribonucleoside 5'-diphosphate + phosphate + H(+). The enzyme catalyses Selective cleavage of Gln-|-Gly bond in the poliovirus polyprotein. In other picornavirus reactions Glu may be substituted for Gln, and Ser or Thr for Gly.. Its function is as follows. Capsid proteins VP1, VP2, and VP3 form a closed capsid enclosing the viral positive strand RNA genome. All these proteins contain a beta-sheet structure called beta-barrel jelly roll. Together they form an icosahedral capsid (T=3) composed of 60 copies of each VP1, VP2, and VP3, with a diameter of approximately 300 Angstroms. VP1 is situated at the 12 fivefold axes, whereas VP2 and VP3 are located at the quasi-sixfold axes. Functionally, VP0 precursor is a component of immature procapsids. The N-terminal domain of VP0, protein VP4, is needed for the assembly of 12 pentamers into the icosahedral structure. Unlike other picornaviruses, AEV VP4 may not be myristoylated. In terms of biological role, protein 2B and 2BC precursor affect membrane integrity and cause an increase in membrane permeability. Associates with and induces structural rearrangements of intracellular membranes. It displays RNA-binding, nucleotide binding and NTPase activities. Its function is as follows. Protein 3A, via its hydrophobic domain, serves as membrane anchor. Functionally, protein 3B is covalently linked to the 5'-end of both the positive-strand and negative-strand genomic RNAs. It acts as a genome-linked replication primer. In terms of biological role, cysteine protease that generates mature viral proteins from the precursor polyprotein. In addition to its proteolytic activity, it binds to viral RNA, and thus influences viral genome replication. RNA and substrate bind cooperatively to the protease. RNA-directed RNA polymerase 3D-POL replicates genomic and antigenomic RNA by recognizing replications specific signals. The protein is Genome polyprotein of Avian encephalomyelitis virus (strain Van Reokel) (AEV).